Here is a 57-residue protein sequence, read N- to C-terminus: Cytochrome b-c1 complex subunit 10, mitochondrial (57 aa).

The Mitochondrial matrix segment spans residues 1–23; the sequence is MAGTSGLLNAVKPKIQTIDIQAA. The chain crosses the membrane as a helical span at residues 24–44; the sequence is AGWGIAAAAGAIWVVQPFGWI. Residues 45 to 57 are Mitochondrial intermembrane-facing; that stretch reads KKTFIDPPPTEEK.

This sequence belongs to the UQCR11/QCR10 family. As to quaternary structure, component of the ubiquinol-cytochrome c oxidoreductase (cytochrome b-c1 complex, complex III, CIII), a multisubunit enzyme composed of 10 subunits. The complex is composed of 3 respiratory subunits cytochrome b (MT-CYB), cytochrome c1 (CYC1-1 or CYC1-2) and Rieske protein (UCR1-1 or UCR1-2), 2 core protein subunits MPPalpha1 (or MPPalpha2) and MPPB, and 5 low-molecular weight protein subunits QCR7-1 (or QCR7-2), UCRQ-1 (or UCRQ-2), QCR9, UCRY and probably QCR6-1 (or QCR6-2). The complex exists as an obligatory dimer and forms supercomplexes (SCs) in the inner mitochondrial membrane with NADH-ubiquinone oxidoreductase (complex I, CI), resulting in different assemblies (supercomplexes SCI(1)III(2) and SCI(2)III(4)).

It is found in the mitochondrion inner membrane. In terms of biological role, component of the ubiquinol-cytochrome c oxidoreductase, a multisubunit transmembrane complex that is part of the mitochondrial electron transport chain which drives oxidative phosphorylation. The respiratory chain contains 3 multisubunit complexes succinate dehydrogenase (complex II, CII), ubiquinol-cytochrome c oxidoreductase (cytochrome b-c1 complex, complex III, CIII) and cytochrome c oxidase (complex IV, CIV), that cooperate to transfer electrons derived from NADH and succinate to molecular oxygen, creating an electrochemical gradient over the inner membrane that drives transmembrane transport and the ATP synthase. The cytochrome b-c1 complex catalyzes electron transfer from ubiquinol to cytochrome c, linking this redox reaction to translocation of protons across the mitochondrial inner membrane, with protons being carried across the membrane as hydrogens on the quinol. In the process called Q cycle, 2 protons are consumed from the matrix, 4 protons are released into the intermembrane space and 2 electrons are passed to cytochrome c. The chain is Cytochrome b-c1 complex subunit 10, mitochondrial (UCRY) from Arabidopsis thaliana (Mouse-ear cress).